A 66-amino-acid polypeptide reads, in one-letter code: Conotoxin Cl14.1b (66 aa).

The signal sequence occupies residues 1–19 (MNVTVMFLVLLLTMPLTDG). Residues 20–47 (FNIRAINGGELFGLVQRDAGNALDHGFY) constitute a propeptide that is removed on maturation.

This sequence belongs to the conotoxin L superfamily. Post-translationally, contains 2 disulfide bonds. As to expression, expressed by the venom duct.

The protein resides in the secreted. This is Conotoxin Cl14.1b from Californiconus californicus (California cone).